The following is a 185-amino-acid chain: Segregation and condensation protein B (185 aa).

It belongs to the ScpB family. In terms of assembly, homodimer. Homodimerization may be required to stabilize the binding of ScpA to the Smc head domains. Component of a cohesin-like complex composed of ScpA, ScpB and the Smc homodimer, in which ScpA and ScpB bind to the head domain of Smc. The presence of the three proteins is required for the association of the complex with DNA.

The protein resides in the cytoplasm. Functionally, participates in chromosomal partition during cell division. May act via the formation of a condensin-like complex containing Smc and ScpA that pull DNA away from mid-cell into both cell halves. This chain is Segregation and condensation protein B, found in Alkaliphilus oremlandii (strain OhILAs) (Clostridium oremlandii (strain OhILAs)).